The sequence spans 464 residues: Glucan 1,3-beta-glucosidase 3 (464 aa).

It belongs to the glycosyl hydrolase 5 (cellulase A) family.

The catalysed reaction is Successive hydrolysis of beta-D-glucose units from the non-reducing ends of (1-&gt;3)-beta-D-glucans, releasing alpha-glucose.. The protein is Glucan 1,3-beta-glucosidase 3 (exg3) of Schizosaccharomyces pombe (strain 972 / ATCC 24843) (Fission yeast).